Reading from the N-terminus, the 131-residue chain is Large ribosomal subunit protein bL12 (131 aa).

It belongs to the bacterial ribosomal protein bL12 family. In terms of assembly, homodimer. Part of the ribosomal stalk of the 50S ribosomal subunit. Forms a multimeric L10(L12)X complex, where L10 forms an elongated spine to which 2 to 4 L12 dimers bind in a sequential fashion. Binds GTP-bound translation factors.

Its function is as follows. Forms part of the ribosomal stalk which helps the ribosome interact with GTP-bound translation factors. Is thus essential for accurate translation. The protein is Large ribosomal subunit protein bL12 of Prochlorococcus marinus (strain MIT 9313).